The primary structure comprises 135 residues: Galectin-1 (135 aa).

A2 carries the N-acetylalanine modification. One can recognise a Galectin domain in the interval 4-135 (GLVASNLNLK…DFKIKCVAFE (132 aa)). N6-acetyllysine occurs at positions 13, 19, and 29. Position 30 is a phosphoserine (S30). Residues 45–49 (HFNPR), H53, N62, and 69–72 (WGAE) each bind a beta-D-galactoside. K128 is subject to N6-acetyllysine.

In terms of assembly, homodimer. Binds LGALS3BP. Interacts with CD2, CD3, CD4, CD6, CD7, CD43, ALCAM and CD45. Interacts with laminin (via poly-N-acetyllactosamine). Interacts with SUSD2. Interacts with cargo receptor TMED10; the interaction mediates the translocation from the cytoplasm into the ERGIC (endoplasmic reticulum-Golgi intermediate compartment) and thereby secretion.

It localises to the secreted. It is found in the extracellular space. The protein resides in the extracellular matrix. Its subcellular location is the cytoplasm. Lectin that binds beta-galactoside and a wide array of complex carbohydrates. Plays a role in regulating apoptosis, cell proliferation and cell differentiation. Inhibits CD45 protein phosphatase activity and therefore the dephosphorylation of Lyn kinase. Strong inducer of T-cell apoptosis. The polypeptide is Galectin-1 (LGALS1) (Sus scrofa (Pig)).